Here is a 202-residue protein sequence, read N- to C-terminus: Lymphotoxin-alpha (202 aa).

An N-terminal signal peptide occupies residues 1 to 33 (MTPLGRLHLLRVLSTPPVFLLGLLLALPLGAQG). The 143-residue stretch at 60–202 (PAAHLVGYPS…STVFFGAFAL (143 aa)) folds into the THD domain. N93 carries an N-linked (GlcNAc...) asparagine glycan.

It belongs to the tumor necrosis factor family. As to quaternary structure, homotrimer, and heterotrimer of either two LTB and one LTA subunits or (less prevalent) two LTA and one LTB subunits. Interacts with TNFRSF14.

It is found in the secreted. Its subcellular location is the membrane. Functionally, cytokine that in its homotrimeric form binds to TNFRSF1A/TNFR1, TNFRSF1B/TNFBR and TNFRSF14/HVEM. In its heterotrimeric form with LTB binds to TNFRSF3/LTBR. Lymphotoxin is produced by lymphocytes and is cytotoxic for a wide range of tumor cells in vitro and in vivo. The polypeptide is Lymphotoxin-alpha (Lta) (Rattus norvegicus (Rat)).